A 297-amino-acid chain; its full sequence is Transmembrane protein 169 (297 aa).

Residues 1 to 85 form a disordered region; it reads MEEPTAVEGQ…KEEEGDDFLD (85 aa). Residues 1-159 are Extracellular-facing; the sequence is MEEPTAVEGQ…CQMGADRGPH (159 aa). The span at 61-85 shows a compositional bias: acidic residues; the sequence is KTDEEPGESEGGDQPKEEEGDDFLD. The helical transmembrane segment at 160 to 180 threads the bilayer; sequence VVLWTLICLPVVFILSFVVSF. The Cytoplasmic segment spans residues 181–210; it reads YYGTITWYNIFLVYNEERTFWHKISYCPCL. The helical transmembrane segment at 211–231 threads the bilayer; the sequence is VLFYPVLIMAMASSLGLYAAV. The Extracellular segment spans residues 232–297; the sequence is VQLSWSWEAW…PIQEVETSTV (66 aa).

It is found in the membrane. The polypeptide is Transmembrane protein 169 (TMEM169) (Homo sapiens (Human)).